Here is a 388-residue protein sequence, read N- to C-terminus: Dual-specificity RNA methyltransferase RlmN (388 aa).

Glutamate 109 acts as the Proton acceptor in catalysis. Positions 115–354 constitute a Radical SAM core domain; sequence EDDRATLCVS…TIVRKTRGDD (240 aa). A disulfide bond links cysteine 122 and cysteine 359. Positions 129, 133, and 136 each coordinate [4Fe-4S] cluster. S-adenosyl-L-methionine contacts are provided by residues 183–184, serine 215, 237–239, and asparagine 316; these read GE and SLH. Residue cysteine 359 is the S-methylcysteine intermediate of the active site.

Belongs to the radical SAM superfamily. RlmN family. [4Fe-4S] cluster is required as a cofactor.

Its subcellular location is the cytoplasm. It catalyses the reaction adenosine(2503) in 23S rRNA + 2 reduced [2Fe-2S]-[ferredoxin] + 2 S-adenosyl-L-methionine = 2-methyladenosine(2503) in 23S rRNA + 5'-deoxyadenosine + L-methionine + 2 oxidized [2Fe-2S]-[ferredoxin] + S-adenosyl-L-homocysteine. The catalysed reaction is adenosine(37) in tRNA + 2 reduced [2Fe-2S]-[ferredoxin] + 2 S-adenosyl-L-methionine = 2-methyladenosine(37) in tRNA + 5'-deoxyadenosine + L-methionine + 2 oxidized [2Fe-2S]-[ferredoxin] + S-adenosyl-L-homocysteine. Its function is as follows. Specifically methylates position 2 of adenine 2503 in 23S rRNA and position 2 of adenine 37 in tRNAs. m2A2503 modification seems to play a crucial role in the proofreading step occurring at the peptidyl transferase center and thus would serve to optimize ribosomal fidelity. The protein is Dual-specificity RNA methyltransferase RlmN of Salmonella typhimurium (strain LT2 / SGSC1412 / ATCC 700720).